Here is a 75-residue protein sequence, read N- to C-terminus: Large ribosomal subunit protein bL31 (75 aa).

Belongs to the bacterial ribosomal protein bL31 family. Type A subfamily. Part of the 50S ribosomal subunit.

Binds the 23S rRNA. The sequence is that of Large ribosomal subunit protein bL31 from Rhodopseudomonas palustris (strain BisB5).